We begin with the raw amino-acid sequence, 133 residues long: Large ribosomal subunit protein uL14 (133 aa).

Belongs to the universal ribosomal protein uL14 family. Part of the 50S ribosomal subunit. Forms a cluster with proteins L3 and L24e, part of which may contact the 16S rRNA in 2 intersubunit bridges.

Its function is as follows. Binds to 23S rRNA. Forms part of two intersubunit bridges in the 70S ribosome. This chain is Large ribosomal subunit protein uL14, found in Nanoarchaeum equitans (strain Kin4-M).